The chain runs to 333 residues: Uroporphyrinogen decarboxylase (333 aa).

Substrate is bound by residues 21 to 25 (RQVGR), D70, Y139, S194, and H309.

This sequence belongs to the uroporphyrinogen decarboxylase family. In terms of assembly, homodimer.

It localises to the cytoplasm. It catalyses the reaction uroporphyrinogen III + 4 H(+) = coproporphyrinogen III + 4 CO2. Its pathway is porphyrin-containing compound metabolism; protoporphyrin-IX biosynthesis; coproporphyrinogen-III from 5-aminolevulinate: step 4/4. Catalyzes the decarboxylation of four acetate groups of uroporphyrinogen-III to yield coproporphyrinogen-III. The chain is Uroporphyrinogen decarboxylase from Chlamydia abortus (strain DSM 27085 / S26/3) (Chlamydophila abortus).